Here is a 381-residue protein sequence, read N- to C-terminus: Creatine kinase M-type (381 aa).

The region spanning 11 to 98 (KLNYKPQEEY…FDPIIQDRHG (88 aa)) is the Phosphagen kinase N-terminal domain. A Phosphagen kinase C-terminal domain is found at 125 to 367 (YVLSSRVRTG…KLMVEMEKKL (243 aa)). An ATP-binding site is contributed by 128-132 (SSRVR). A Phosphoserine modification is found at serine 164. Threonine 166 carries the post-translational modification Phosphothreonine. Serine 178 carries the phosphoserine modification. Phosphothreonine is present on threonine 180. An ATP-binding site is contributed by histidine 191. Position 199 is a phosphoserine (serine 199). Residues arginine 236 and arginine 292 each contribute to the ATP site. 2 positions are modified to phosphothreonine: threonine 313 and threonine 322. ATP contacts are provided by residues 320-325 (RGTGGV) and aspartate 335. Serine 372 is subject to Phosphoserine.

It belongs to the ATP:guanido phosphotransferase family. Dimer of identical or non-identical chains, which can be either B (brain type) or M (muscle type). With MM being the major form in skeletal muscle and myocardium, MB existing in myocardium, and BB existing in many tissues, especially brain.

The protein localises to the cytoplasm. It catalyses the reaction creatine + ATP = N-phosphocreatine + ADP + H(+). Its function is as follows. Reversibly catalyzes the transfer of phosphate between ATP and various phosphogens (e.g. creatine phosphate). Creatine kinase isoenzymes play a central role in energy transduction in tissues with large, fluctuating energy demands, such as skeletal muscle, heart, brain and spermatozoa. The chain is Creatine kinase M-type (Ckm) from Mus musculus (Mouse).